The following is a 498-amino-acid chain: Lysine--tRNA ligase (498 aa).

Mg(2+) is bound by residues glutamate 407 and glutamate 414.

It belongs to the class-II aminoacyl-tRNA synthetase family. As to quaternary structure, homodimer. Requires Mg(2+) as cofactor.

The protein localises to the cytoplasm. It catalyses the reaction tRNA(Lys) + L-lysine + ATP = L-lysyl-tRNA(Lys) + AMP + diphosphate. The sequence is that of Lysine--tRNA ligase from Rhizobium johnstonii (strain DSM 114642 / LMG 32736 / 3841) (Rhizobium leguminosarum bv. viciae).